Here is a 421-residue protein sequence, read N- to C-terminus: D-inositol 3-phosphate glycosyltransferase (421 aa).

His13 contributes to the 1D-myo-inositol 3-phosphate binding site. UDP-N-acetyl-alpha-D-glucosamine contacts are provided by residues 19 to 20 (QP) and Gly27. 1D-myo-inositol 3-phosphate contacts are provided by residues 24–29 (DAGGMN), Lys82, Tyr115, Thr139, and Arg159. Positions 233, 238, and 294 each coordinate UDP-N-acetyl-alpha-D-glucosamine. Residues Phe303, Arg304, and Ala306 each coordinate Mg(2+). Glu316 and Glu324 together coordinate UDP-N-acetyl-alpha-D-glucosamine. Residue Thr330 participates in Mg(2+) binding.

It belongs to the glycosyltransferase group 1 family. MshA subfamily. As to quaternary structure, homodimer.

It carries out the reaction 1D-myo-inositol 3-phosphate + UDP-N-acetyl-alpha-D-glucosamine = 1D-myo-inositol 2-acetamido-2-deoxy-alpha-D-glucopyranoside 3-phosphate + UDP + H(+). Its function is as follows. Catalyzes the transfer of a N-acetyl-glucosamine moiety to 1D-myo-inositol 3-phosphate to produce 1D-myo-inositol 2-acetamido-2-deoxy-glucopyranoside 3-phosphate in the mycothiol biosynthesis pathway. This is D-inositol 3-phosphate glycosyltransferase from Arthrobacter sp. (strain FB24).